The following is a 212-amino-acid chain: Endoplasmic reticulum vesicle protein 25 (212 aa).

The N-terminal stretch at 1–21 is a signal peptide; it reads MKSFAACVLLLCALFFEQVFA. Over 22-181 the chain is Lumenal; sequence VRFDIPASTK…TNESTNRRVR (160 aa). The 89-residue stretch at 34–122 folds into the GOLD domain; that stretch reads QVCIRDFVSE…SRSIELDIES (89 aa). The helical transmembrane segment at 182–202 threads the bilayer; the sequence is NFSIAVIVVLVALGAWQVNYM. The Cytoplasmic portion of the chain corresponds to 203–212; the sequence is KNFFRAKHII.

This sequence belongs to the EMP24/GP25L family.

The protein localises to the endoplasmic reticulum membrane. Its subcellular location is the golgi apparatus membrane. Functionally, constituent of COPII-coated endoplasmic reticulum-derived transport vesicles. Required for efficient transport of a subset of secretory proteins to the Golgi. Facilitates retrograde transport from the Golgi to the endoplasmic reticulum. In Kluyveromyces lactis (strain ATCC 8585 / CBS 2359 / DSM 70799 / NBRC 1267 / NRRL Y-1140 / WM37) (Yeast), this protein is Endoplasmic reticulum vesicle protein 25 (ERV25).